We begin with the raw amino-acid sequence, 471 residues long: tRNA-2-methylthio-N(6)-dimethylallyladenosine synthase (471 aa).

Positions 33 to 151 (KKYMITTYGC…FPELLSRSME (119 aa)) constitute an MTTase N-terminal domain. Residues C42, C78, C112, C188, C192, and C195 each coordinate [4Fe-4S] cluster. In terms of domain architecture, Radical SAM core spans 174-404 (RKYDLKGFIN…LDKVNEISAE (231 aa)). The TRAM domain occupies 407–470 (QSYLNKVVEV…TFSLNGEVIQ (64 aa)).

Belongs to the methylthiotransferase family. MiaB subfamily. As to quaternary structure, monomer. Requires [4Fe-4S] cluster as cofactor.

The protein resides in the cytoplasm. It catalyses the reaction N(6)-dimethylallyladenosine(37) in tRNA + (sulfur carrier)-SH + AH2 + 2 S-adenosyl-L-methionine = 2-methylsulfanyl-N(6)-dimethylallyladenosine(37) in tRNA + (sulfur carrier)-H + 5'-deoxyadenosine + L-methionine + A + S-adenosyl-L-homocysteine + 2 H(+). In terms of biological role, catalyzes the methylthiolation of N6-(dimethylallyl)adenosine (i(6)A), leading to the formation of 2-methylthio-N6-(dimethylallyl)adenosine (ms(2)i(6)A) at position 37 in tRNAs that read codons beginning with uridine. In Alkaliphilus oremlandii (strain OhILAs) (Clostridium oremlandii (strain OhILAs)), this protein is tRNA-2-methylthio-N(6)-dimethylallyladenosine synthase.